The sequence spans 425 residues: Dihydroorotase (425 aa).

Zn(2+)-binding residues include His56 and His58. Substrate is bound by residues His58–Arg60 and Asn90. Positions 148, 175, and 228 each coordinate Zn(2+). Asn274 is a substrate binding site. Residue Asp301 coordinates Zn(2+). Asp301 is an active-site residue. Residues His305 and Phe319–Gly320 contribute to the substrate site.

Belongs to the metallo-dependent hydrolases superfamily. DHOase family. Class I DHOase subfamily. Zn(2+) is required as a cofactor.

The catalysed reaction is (S)-dihydroorotate + H2O = N-carbamoyl-L-aspartate + H(+). It functions in the pathway pyrimidine metabolism; UMP biosynthesis via de novo pathway; (S)-dihydroorotate from bicarbonate: step 3/3. Functionally, catalyzes the reversible cyclization of carbamoyl aspartate to dihydroorotate. The chain is Dihydroorotase from Lactobacillus delbrueckii subsp. bulgaricus (strain ATCC BAA-365 / Lb-18).